The following is a 180-amino-acid chain: NADH-quinone oxidoreductase subunit I (180 aa).

4Fe-4S ferredoxin-type domains follow at residues 50–80 (LTRN…LQKS) and 90–119 (KFFR…LMPD). The [4Fe-4S] cluster site is built by Cys60, Cys63, Cys66, Cys70, Cys99, Cys102, Cys105, and Cys109.

It belongs to the complex I 23 kDa subunit family. NDH-1 is composed of 13 different subunits. Subunits NuoA, H, J, K, L, M, N constitute the membrane sector of the complex. The cofactor is [4Fe-4S] cluster.

The protein localises to the cell membrane. It carries out the reaction a quinone + NADH + 5 H(+)(in) = a quinol + NAD(+) + 4 H(+)(out). In terms of biological role, NDH-1 shuttles electrons from NADH, via FMN and iron-sulfur (Fe-S) centers, to quinones in the respiratory chain. The immediate electron acceptor for the enzyme in this species is believed to be ubiquinone. Couples the redox reaction to proton translocation (for every two electrons transferred, four hydrogen ions are translocated across the cytoplasmic membrane), and thus conserves the redox energy in a proton gradient. In Buchnera aphidicola subsp. Schizaphis graminum (strain Sg), this protein is NADH-quinone oxidoreductase subunit I.